Reading from the N-terminus, the 612-residue chain is Threonine--tRNA ligase (612 aa).

A catalytic region spans residues 218–509 (DHRKLGVELG…LSEHFGGNFP (292 aa)). Zn(2+) is bound by residues cysteine 310, histidine 361, and histidine 486.

It belongs to the class-II aminoacyl-tRNA synthetase family. As to quaternary structure, homodimer. Requires Zn(2+) as cofactor.

It localises to the cytoplasm. It catalyses the reaction tRNA(Thr) + L-threonine + ATP = L-threonyl-tRNA(Thr) + AMP + diphosphate + H(+). Catalyzes the attachment of threonine to tRNA(Thr) in a two-step reaction: L-threonine is first activated by ATP to form Thr-AMP and then transferred to the acceptor end of tRNA(Thr). Also edits incorrectly charged L-seryl-tRNA(Thr). In Helicobacter pylori (strain HPAG1), this protein is Threonine--tRNA ligase.